We begin with the raw amino-acid sequence, 465 residues long: Argininosuccinate lyase (465 aa).

It belongs to the lyase 1 family. Argininosuccinate lyase subfamily.

It localises to the cytoplasm. It carries out the reaction 2-(N(omega)-L-arginino)succinate = fumarate + L-arginine. It functions in the pathway amino-acid biosynthesis; L-arginine biosynthesis; L-arginine from L-ornithine and carbamoyl phosphate: step 3/3. In Rhodopseudomonas palustris (strain HaA2), this protein is Argininosuccinate lyase.